Here is a 169-residue protein sequence, read N- to C-terminus: Sulfopyruvate decarboxylase subunit alpha (169 aa).

This sequence belongs to the ComD family. As to quaternary structure, heterododecamer composed of 6 subunits alpha and 6 subunits beta.

The enzyme catalyses 3-sulfopyruvate + H(+) = sulfoacetaldehyde + CO2. Its pathway is cofactor biosynthesis; coenzyme M biosynthesis; sulfoacetaldehyde from phosphoenolpyruvate and sulfite: step 4/4. With respect to regulation, inhibited by oxygen when heated in air at 80 degrees Celsius. The enzyme is reactivated by addition of dithionite. Its function is as follows. Involved in the biosynthesis of the coenzyme M (2-mercaptoethanesulfonic acid). Catalyzes the decarboxylation of sulfopyruvate to sulfoacetaldehyde. The polypeptide is Sulfopyruvate decarboxylase subunit alpha (Methanocaldococcus jannaschii (strain ATCC 43067 / DSM 2661 / JAL-1 / JCM 10045 / NBRC 100440) (Methanococcus jannaschii)).